A 247-amino-acid polypeptide reads, in one-letter code: Adenosylcobinamide-GDP ribazoletransferase (247 aa).

4 helical membrane passes run Ile-34 to Val-54, Cys-59 to Phe-79, Gly-113 to Leu-133, and Val-194 to Ile-214.

Belongs to the CobS family. Requires Mg(2+) as cofactor.

The protein resides in the cell inner membrane. The enzyme catalyses alpha-ribazole + adenosylcob(III)inamide-GDP = adenosylcob(III)alamin + GMP + H(+). The catalysed reaction is alpha-ribazole 5'-phosphate + adenosylcob(III)inamide-GDP = adenosylcob(III)alamin 5'-phosphate + GMP + H(+). It functions in the pathway cofactor biosynthesis; adenosylcobalamin biosynthesis; adenosylcobalamin from cob(II)yrinate a,c-diamide: step 7/7. Functionally, joins adenosylcobinamide-GDP and alpha-ribazole to generate adenosylcobalamin (Ado-cobalamin). Also synthesizes adenosylcobalamin 5'-phosphate from adenosylcobinamide-GDP and alpha-ribazole 5'-phosphate. The protein is Adenosylcobinamide-GDP ribazoletransferase of Escherichia coli (strain ATCC 8739 / DSM 1576 / NBRC 3972 / NCIMB 8545 / WDCM 00012 / Crooks).